A 125-amino-acid chain; its full sequence is Cytochrome c2 (125 aa).

A signal peptide spans 1 to 21 (MKAIKIAMVGAALVWSASAYA). Residues 23-123 (GDPVKGEQVF…DVIAFLATQH (101 aa)) enclose the Cytochrome c domain. Residues cysteine 35, cysteine 38, histidine 39, and methionine 101 each contribute to the heme c site.

Belongs to the cytochrome c family. Binds 1 heme c group covalently per subunit.

Cytochrome c2 is found mainly in purple, non-sulfur, photosynthetic bacteria where it functions as the electron donor to the oxidized bacteriochlorophyll in the photophosphorylation pathway. However, it may also have a role in the respiratory chain and is found in some non-photosynthetic bacteria. This chain is Cytochrome c2, found in Rhodomicrobium vannielii (strain ATCC 17100 / DSM 162 / LMG 4299 / NCIMB 10020 / ATH 3.1.1).